We begin with the raw amino-acid sequence, 692 residues long: Elongation factor G 2 (692 aa).

One can recognise a tr-type G domain in the interval 8 to 283; sequence EKTRNIGIMA…SVVAYLPSPL (276 aa). GTP-binding positions include 17-24, 81-85, and 135-138; these read AHIDAGKT, DTPGH, and NKMD.

This sequence belongs to the TRAFAC class translation factor GTPase superfamily. Classic translation factor GTPase family. EF-G/EF-2 subfamily.

The protein resides in the cytoplasm. In terms of biological role, catalyzes the GTP-dependent ribosomal translocation step during translation elongation. During this step, the ribosome changes from the pre-translocational (PRE) to the post-translocational (POST) state as the newly formed A-site-bound peptidyl-tRNA and P-site-bound deacylated tRNA move to the P and E sites, respectively. Catalyzes the coordinated movement of the two tRNA molecules, the mRNA and conformational changes in the ribosome. The chain is Elongation factor G 2 from Geobacter sulfurreducens (strain ATCC 51573 / DSM 12127 / PCA).